A 576-amino-acid chain; its full sequence is Lysine--tRNA ligase (576 aa).

Mg(2+) contacts are provided by Glu-412 and Glu-419.

It belongs to the class-II aminoacyl-tRNA synthetase family. In terms of assembly, homodimer. The cofactor is Mg(2+).

The protein resides in the cytoplasm. It catalyses the reaction tRNA(Lys) + L-lysine + ATP = L-lysyl-tRNA(Lys) + AMP + diphosphate. This chain is Lysine--tRNA ligase, found in Phocaeicola vulgatus (strain ATCC 8482 / DSM 1447 / JCM 5826 / CCUG 4940 / NBRC 14291 / NCTC 11154) (Bacteroides vulgatus).